Here is a 1306-residue protein sequence, read N- to C-terminus: Activating transcription factor 7-interacting protein 1 (1306 aa).

The residue at position 1 (M1) is an N-acetylmethionine. A disordered region spans residues 1–23 (MDSVEEPQKKVFKARKTMRASDR). Residue K33 forms a Glycyl lysine isopeptide (Lys-Gly) (interchain with G-Cter in SUMO2) linkage. S57 and S112 each carry phosphoserine. 7 disordered regions span residues 104–470 (EDLN…SMET), 496–604 (LPVE…SKRR), 689–722 (AAKDDLKKRQESPPNPPISPGKPANDTNSNNNMT), 765–785 (VVSSQPKLQTSATSGSLPAAP), 871–895 (PLPNPTKPNIPSVPSPSSIQRNSST), 920–1060 (RTSL…GPSQ), and 1152–1196 (AGPQ…STSL). Composition is skewed to polar residues over residues 109 to 134 (EALSPSITCDLSSRVTTEPGSGSPAS) and 143 to 162 (VSDNPASDNPASDNPASDNP). T124 is modified (phosphothreonine). 3 stretches are compositionally biased toward low complexity: residues 185 to 212 (EEPPSSDPSSSDPTSSEPSSSEPTCSEP), 246 to 261 (EAASSEPATSEPASDE), and 284 to 303 (PSGDSQSDEPPSSEDSLPRS). Residues 432-441 (QSEKDEHKSP) are compositionally biased toward basic and acidic residues. Phosphoserine is present on residues S511, S514, S516, and S533. The segment covering 513–523 (GSPSKQESSEN) has biased composition (polar residues). Basic and acidic residues-rich tracts occupy residues 557–566 (EGEKSEKDGK), 592–601 (KSEDMDSVES), and 689–699 (AAKDDLKKRQE). The short motif at 587-605 (RRKRSKSEDMDSVESKRRR) is the Nuclear localization signal element. K592 participates in a covalent cross-link: Glycyl lysine isopeptide (Lys-Gly) (interchain with G-Cter in SUMO2). S593 carries the post-translational modification Phosphoserine. The interaction with SETDB1 stretch occupies residues 596–851 (MDSVESKRRR…NQPSGNVEFI (256 aa)). A coiled-coil region spans residues 666–696 (NKRHKAVLTELQAKIARLTKRFGAAKDDLKK). Phosphoserine is present on residues S700 and S707. Residues 713–722 (NDTNSNNNMT) show a composition bias toward polar residues. Residues 871-884 (PLPNPTKPNIPSVP) are compositionally biased toward pro residues. S933 bears the Phosphoserine mark. Residues K944 and K974 each participate in a glycyl lysine isopeptide (Lys-Gly) (interchain with G-Cter in SUMO2) cross-link. Residues 948–981 (STFSPPSSAEQNSSATPRIVTENQTNKTVDSSIN) are compositionally biased toward polar residues. The span at 987-1000 (STSQSGKASSSDSS) shows a compositional bias: low complexity. An interaction with SUMO region spans residues 1001–1011 (GVIDLTMDDEE). Low complexity predominate over residues 1022-1040 (SPPSSSTVSTSQPMSRPLQ). Residues 1054–1143 (PTSGPSQATI…RVPQTTTYVV (90 aa)) enclose the Fibronectin type-III 1 domain. The span at 1170–1187 (PRPLHPAPLPEAPQPQRL) shows a compositional bias: pro residues. The tract at residues 1190-1306 (EAASTSLPQK…TDVISSSQNS (117 aa)) is interaction with MBD1. The 107-residue stretch at 1196–1302 (LPQKPHLKLA…DPQSTDVISS (107 aa)) folds into the Fibronectin type-III 2 domain.

Belongs to the MCAF family. As to quaternary structure, interacts with MBD1; the interaction is enhanced when MBD1 is sumoylated. Interacts with SETDB1; the interaction protects SETDB1 from proteasomal degradation and is required to stimulate histone methyltransferase activity and facilitate the conversion of dimethylated to trimethylated H3 'Lys-9'. Interacts with SUMO ubiquitin-like proteins (SUMO1, SUNO2 and SUMO3), with a preference for SUMO2 and SUMO3. Interacts with SP1, ATF7 and ZHX1. Interacts with the general transcription machinery, including ERCC2, ERCC3, GTF2E1, GTF2E2 and POLR2A. Ubiquitously expressed at all stages studied.

It is found in the nucleus. Functionally, recruiter that couples transcriptional factors to general transcription apparatus and thereby modulates transcription regulation and chromatin formation. Can both act as an activator or a repressor depending on the context. Required for HUSH-mediated heterochromatin formation and gene silencing. Mediates MBD1-dependent transcriptional repression, probably by recruiting complexes containing SETDB1. Stabilizes SETDB1, is required to stimulate histone methyltransferase activity of SETDB1 and facilitates the conversion of dimethylated to trimethylated H3 'Lys-9' (H3K9me3). The complex formed with MBD1 and SETDB1 represses transcription and couples DNA methylation and histone H3 'Lys-9' trimethylation (H3K9me3). Facilitates telomerase TERT and TERC gene expression by SP1 in cancer cells. The sequence is that of Activating transcription factor 7-interacting protein 1 (Atf7ip) from Mus musculus (Mouse).